A 98-amino-acid chain; its full sequence is Large ribosomal subunit protein mL53 (98 aa).

The protein belongs to the mitochondrion-specific ribosomal protein mL53 family. As to quaternary structure, component of the mitochondrial large ribosomal subunit (mt-LSU). Mature yeast 74S mitochondrial ribosomes consist of a small (37S) and a large (54S) subunit. The 37S small subunit contains a 15S ribosomal RNA (15S mt-rRNA) and 34 different proteins. The 54S large subunit contains a 21S rRNA (21S mt-rRNA) and 46 different proteins.

It localises to the mitochondrion. Component of the mitochondrial ribosome (mitoribosome), a dedicated translation machinery responsible for the synthesis of mitochondrial genome-encoded proteins, including at least some of the essential transmembrane subunits of the mitochondrial respiratory chain. The mitoribosomes are attached to the mitochondrial inner membrane and translation products are cotranslationally integrated into the membrane. In Saccharomyces cerevisiae (strain ATCC 204508 / S288c) (Baker's yeast), this protein is Large ribosomal subunit protein mL53 (MRPL44).